The following is a 676-amino-acid chain: Methionine--tRNA ligase (676 aa).

The 'HIGH' region signature appears at 15–25 (PYANGPIHLGH). Zn(2+) contacts are provided by Cys-146, Cys-149, Cys-159, and Cys-162. Positions 332–336 (KMSKS) match the 'KMSKS' region motif. Lys-335 contacts ATP. The region spanning 575–676 (DFAKIDLRIA…EGAQPGMRVK (102 aa)) is the tRNA-binding domain.

It belongs to the class-I aminoacyl-tRNA synthetase family. MetG type 1 subfamily. As to quaternary structure, homodimer. Zn(2+) is required as a cofactor.

Its subcellular location is the cytoplasm. The catalysed reaction is tRNA(Met) + L-methionine + ATP = L-methionyl-tRNA(Met) + AMP + diphosphate. In terms of biological role, is required not only for elongation of protein synthesis but also for the initiation of all mRNA translation through initiator tRNA(fMet) aminoacylation. The protein is Methionine--tRNA ligase of Shewanella sp. (strain MR-4).